A 199-amino-acid polypeptide reads, in one-letter code: Prolactin-1 (199 aa).

Disulfide bonds link cysteine 4/cysteine 11, cysteine 58/cysteine 174, and cysteine 191/cysteine 199. An N-linked (GlcNAc...) asparagine glycan is attached at asparagine 60.

This sequence belongs to the somatotropin/prolactin family. In terms of processing, glycosylated.

The protein localises to the secreted. The chain is Prolactin-1 from Crocodylus novaeguineae (Crocodile).